The chain runs to 461 residues: Ribitol-5-phosphate transferase FKTN (461 aa).

The Cytoplasmic segment spans residues methionine 1–asparagine 7. The segment at lysine 6–tyrosine 27 is required and sufficient for interaction with POMGNT1. Residues valine 8–tyrosine 28 traverse the membrane as a helical; Signal-anchor for type II membrane protein segment. Topologically, residues lysine 29–tyrosine 461 are lumenal. Asparagine 92 is a glycosylation site (N-linked (GlcNAc...) asparagine).

It belongs to the LicD transferase family. Forms a complex composed of FKTN/fukutin, FKRP and RXYLT1/TMEM5. Interacts (via transmembrane domain) with POMGNT1; the interaction is direct and is required for normal POMGNT1 location in Golgi membranes. Expressed in the retina, with highest levels found in the inner segments of photoreceptors and the outer plexiform layer (at protein level). Expressed at lower levels in the inner and outer nuclear layers, the inner plexiform layers, and the ganglion cell layers of the retina (at protein level). Expressed in the heart, brain, spleen, lung, liver, skeletal muscle, kidney and testis.

The protein localises to the golgi apparatus membrane. It is found in the cytoplasm. It localises to the nucleus. The protein resides in the endoplasmic reticulum. The catalysed reaction is 3-O-[beta-D-GalNAc-(1-&gt;3)-beta-D-GlcNAc-(1-&gt;4)-(O-6-P-alpha-D-Man)]-Thr-[protein] + CDP-L-ribitol = 3-O-[Rib-ol-P-3-beta-D-GalNAc-(1-&gt;3)-beta-D-GlcNAc-(1-&gt;4)-(O-6-P-alpha-D-Man)]-Thr-[protein] + CMP + H(+). It participates in protein modification; protein glycosylation. Catalyzes the transfer of CDP-ribitol to the distal N-acetylgalactosamine of the phosphorylated O-mannosyl trisaccharide (N-acetylgalactosamine-beta-3-N-acetylglucosamine-beta-4-(phosphate-6-)mannose), a carbohydrate structure present in alpha-dystroglycan (DAG1). This constitutes the first step in the formation of the ribitol 5-phosphate tandem repeat which links the phosphorylated O-mannosyl trisaccharide to the ligand binding moiety composed of repeats of 3-xylosyl-alpha-1,3-glucuronic acid-beta-1. Required for normal location of POMGNT1 in Golgi membranes, and for normal POMGNT1 activity. May interact with and reinforce a large complex encompassing the outside and inside of muscle membranes. Could be involved in brain development. This Mus musculus (Mouse) protein is Ribitol-5-phosphate transferase FKTN.